A 355-amino-acid polypeptide reads, in one-letter code: 3-dehydroquinate synthase (355 aa).

NAD(+)-binding positions include 71-76 (EGEERK), 105-109 (GVVGD), 129-130 (TS), Lys142, and Lys151. Zn(2+)-binding residues include Glu184, His246, and His263.

This sequence belongs to the sugar phosphate cyclases superfamily. Dehydroquinate synthase family. It depends on Co(2+) as a cofactor. Requires Zn(2+) as cofactor. The cofactor is NAD(+).

It is found in the cytoplasm. The enzyme catalyses 7-phospho-2-dehydro-3-deoxy-D-arabino-heptonate = 3-dehydroquinate + phosphate. The protein operates within metabolic intermediate biosynthesis; chorismate biosynthesis; chorismate from D-erythrose 4-phosphate and phosphoenolpyruvate: step 2/7. Functionally, catalyzes the conversion of 3-deoxy-D-arabino-heptulosonate 7-phosphate (DAHP) to dehydroquinate (DHQ). This is 3-dehydroquinate synthase from Streptococcus pneumoniae (strain JJA).